The following is a 168-amino-acid chain: mRNA stability protein IGO1 (168 aa).

Low complexity predominate over residues 1–13 (MSNENLSPNSSNP). A disordered region spans residues 1 to 31 (MSNENLSPNSSNPDLTKLNNGESGTIDTSKF). Polar residues predominate over residues 17–31 (KLNNGESGTIDTSKF). Serine 32 and serine 64 each carry phosphoserine. The disordered stretch occupies residues 125–168 (KEGSISSGPPSSNNGTIGGGSTSSTPVGNHSSSSSSLYTESPIR). Composition is skewed to low complexity over residues 127–139 (GSIS…SNNG) and 146–168 (TSST…SPIR).

It belongs to the endosulfine family. Interacts with RIM15, DHH1, PBP1, PBP4 and LSM12. In terms of processing, phosphorylated at Ser-64 by RIM15.

Functionally, required for TORC1 to properly control gene expression and chronological life span. Plays an essential role in initiation of the G0 program by preventing the degradation of specific nutrient-regulated mRNAs via the 5'-3' mRNA decay pathway. The chain is mRNA stability protein IGO1 (IGO1) from Saccharomyces cerevisiae (strain ATCC 204508 / S288c) (Baker's yeast).